The primary structure comprises 447 residues: Tubulin beta chain (447 aa).

Positions 11, 69, 138, 142, 143, 144, 204, and 226 each coordinate GTP. Glutamate 69 provides a ligand contact to Mg(2+). Residues 424–447 (QYQDASISEGEEDYEEEPQVENEE) are disordered. Positions 432–447 (EGEEDYEEEPQVENEE) are enriched in acidic residues.

The protein belongs to the tubulin family. As to quaternary structure, dimer of alpha and beta chains. A typical microtubule is a hollow water-filled tube with an outer diameter of 25 nm and an inner diameter of 15 nM. Alpha-beta heterodimers associate head-to-tail to form protofilaments running lengthwise along the microtubule wall with the beta-tubulin subunit facing the microtubule plus end conferring a structural polarity. Microtubules usually have 13 protofilaments but different protofilament numbers can be found in some organisms and specialized cells. It depends on Mg(2+) as a cofactor.

The protein resides in the cytoplasm. It is found in the cytoskeleton. In terms of biological role, tubulin is the major constituent of microtubules, a cylinder consisting of laterally associated linear protofilaments composed of alpha- and beta-tubulin heterodimers. Microtubules grow by the addition of GTP-tubulin dimers to the microtubule end, where a stabilizing cap forms. Below the cap, tubulin dimers are in GDP-bound state, owing to GTPase activity of alpha-tubulin. The protein is Tubulin beta chain of Uncinula necator (Grape powdery mildew).